Consider the following 268-residue polypeptide: Mediator of RNA polymerase II transcription subunit 8-A (268 aa).

2 coiled-coil regions span residues 1–26 (MQRE…KNSL) and 117–160 (VEEL…EERE). The tract at residues 190-268 (GLSNRRPPGQ…KSASMHPYQR (79 aa)) is disordered. Residues 223-246 (VPMSLQSNQQQQHMAGVSMSQGNQ) show a composition bias toward polar residues.

This sequence belongs to the Mediator complex subunit 8 family. In terms of assembly, component of the Mediator complex. May be part of a multisubunit E3 ubiquitin-protein ligase complex.

Its subcellular location is the nucleus. It participates in protein modification; protein ubiquitination. Functionally, component of the Mediator complex, a coactivator involved in the regulated transcription of nearly all RNA polymerase II-dependent genes. Mediator functions as a bridge to convey information from gene-specific regulatory proteins to the basal RNA polymerase II transcription machinery. Mediator is recruited to promoters by direct interactions with regulatory proteins and serves as a scaffold for the assembly of a functional preinitiation complex with RNA polymerase II and the general transcription factors. May play a role as a target recruitment subunit in E3 ubiquitin-protein ligase complexes and thus in ubiquitination and subsequent proteasomal degradation of target proteins. This Xenopus laevis (African clawed frog) protein is Mediator of RNA polymerase II transcription subunit 8-A (med8-a).